Consider the following 108-residue polypeptide: Cytochrome bo(3) ubiquinol oxidase subunit 4 (108 aa).

The Cytoplasmic portion of the chain corresponds to 1–16; it reads MNKYKKIKNNFDKEKK. The chain crosses the membrane as a helical span at residues 17–37; sequence SYIVGFLFSLFLTIIPFFCTL. Over 38–46 the chain is Extracellular; that stretch reads NHLFSRKIN. Residues 47–67 form a helical membrane-spanning segment; it reads FFVILLCALSQIIIHFIYFLH. Topologically, residues 68-77 are cytoplasmic; the sequence is LDFSKKNSWN. Residues 78-98 form a helical membrane-spanning segment; sequence IISLLFILIIVFIIVFGSIWI. Residues 99–108 are Extracellular-facing; it reads MYNLNHHVIL.

The protein belongs to the cytochrome c oxidase bacterial subunit 4 family. Heterooctamer of two A chains, two B chains, two C chains and two D chains.

Its subcellular location is the cell membrane. In terms of biological role, cytochrome bo(3) ubiquinol terminal oxidase is the component of the aerobic respiratory chain of E.coli that predominates when cells are grown at high aeration. Has proton pump activity across the membrane in addition to electron transfer, pumping 2 protons/electron. The sequence is that of Cytochrome bo(3) ubiquinol oxidase subunit 4 (cyoD) from Buchnera aphidicola subsp. Schizaphis graminum (strain Sg).